The following is a 966-amino-acid chain: SH3 domain-binding protein 4 (966 aa).

In terms of domain architecture, SH3 1 spans 57–116; the sequence is GAAREVVAIKDCCPSSFTTLKFSKGDRLYVLDSSGAEWWYAHNNTEMGYIPAAYVEPINY. In terms of domain architecture, ZU5 spans 322–457; sequence TNIVCRLDSS…LEPCMYVCVV (136 aa). The 71-residue stretch at 657–727 folds into the SH3 2 domain; the sequence is NNLKFGKLIK…HAKNVLVVGK (71 aa).

In terms of assembly, homodimer or homooligomer.

Its subcellular location is the membrane. It is found in the clathrin-coated pit. The protein localises to the cytoplasmic vesicle. It localises to the clathrin-coated vesicle. The protein resides in the nucleus. Its function is as follows. Possible role in regulating endocytosis of the transferrin receptor at the plasma membrane. Alternatively, may function as a negative regulator of the amino acid-induced TOR signaling by inhibiting the formation of active Rag GTPase complexes. Preferentially binds inactive Rag GTPase complexes and prevents their interaction with the mTORC1 complex inhibiting its relocalization to lysosomes and its activation. Thereby, may indirectly regulate cell growth, proliferation and autophagy. The polypeptide is SH3 domain-binding protein 4 (sh3bp4) (Seriola quinqueradiata (Five-ray yellowtail)).